The primary structure comprises 122 residues: Large ribosomal subunit protein uL14c (122 aa).

This sequence belongs to the universal ribosomal protein uL14 family. In terms of assembly, part of the 50S ribosomal subunit.

The protein resides in the plastid. It localises to the chloroplast. In terms of biological role, binds to 23S rRNA. This chain is Large ribosomal subunit protein uL14c, found in Chlorokybus atmophyticus (Soil alga).